Reading from the N-terminus, the 96-residue chain is Co-chaperonin GroES (96 aa).

Belongs to the GroES chaperonin family. As to quaternary structure, heptamer of 7 subunits arranged in a ring. Interacts with the chaperonin GroEL.

It localises to the cytoplasm. Its function is as follows. Together with the chaperonin GroEL, plays an essential role in assisting protein folding. The GroEL-GroES system forms a nano-cage that allows encapsulation of the non-native substrate proteins and provides a physical environment optimized to promote and accelerate protein folding. GroES binds to the apical surface of the GroEL ring, thereby capping the opening of the GroEL channel. In Neisseria gonorrhoeae (strain ATCC 700825 / FA 1090), this protein is Co-chaperonin GroES.